Here is a 459-residue protein sequence, read N- to C-terminus: MAPSVTLPLTTAILAIARLVAAQQPGTSTPEVHPKLTTYKCTKSGGCVAQDTSVVLDWNYRWMHDANYNSCTVNGGVNTTLCPDEATCGKNCFIEGVDYAASGVTTSGSSLTMNQYMPSSSGGYSSVSPRLYLLDSDGEYVMLKLNGQELSFDVDLSALPCGENGSLYLSQMDENGGANQYNTAGANYGSGYCDAQCPVQTWRNGTLNTSHQGFCCNEMDILEGNSRANALTPHSCTATACDSAGCGFNPYGSGYKSYYGPGDTVDTSKTFTIITQFNTDNGSPSGNLVSITRKYQQNGVDIPSAQPGGDTISSCPSASAYGGLATMGKALSSGMVLVFSIWNDNSQYMNWLDSGNAGPCSSTEGNPSNILANNPNTHVVFSNIRWGDIGSTTNSTAPPPPPASSTTFSTTRRSSTTSSSPSCTQTHWGQCGGIGYSGCKTCTSGTTCQYSNDYYSQCL.

Positions 1–22 (MAPSVTLPLTTAILAIARLVAA) are cleaved as a signal peptide. At glutamine 23 the chain carries Pyrrolidone carboxylic acid. The tract at residues 23–397 (QQPGTSTPEV…DIGSTTNSTA (375 aa)) is catalytic. Cystine bridges form between cysteine 41/cysteine 47, cysteine 71/cysteine 92, cysteine 82/cysteine 88, cysteine 161/cysteine 360, cysteine 193/cysteine 216, cysteine 197/cysteine 215, cysteine 236/cysteine 241, and cysteine 246/cysteine 315. An N-linked (GlcNAc) asparagine glycan is attached at asparagine 78. Asparagine 204 carries N-linked (GlcNAc...) (high mannose) asparagine glycosylation. Glutamate 218 acts as the Nucleophile in catalysis. Glutamate 223 serves as the catalytic Proton donor/acceptor. Positions 390–425 (GSTTNSTAPPPPPASSTTFSTTRRSSTTSSSPSCTQ) are disordered. A glycan (N-linked (GlcNAc...) asparagine) is linked at asparagine 394. The tract at residues 398-423 (PPPPPASSTTFSTTRRSSTTSSSPSC) is linker. Residues 404-425 (SSTTFSTTRRSSTTSSSPSCTQ) are compositionally biased toward low complexity. Intrachain disulfides connect cysteine 423–cysteine 439, cysteine 431–cysteine 448, and cysteine 442–cysteine 458. Positions 423 to 459 (CTQTHWGQCGGIGYSGCKTCTSGTTCQYSNDYYSQCL) constitute a CBM1 domain.

Belongs to the glycosyl hydrolase 7 (cellulase C) family. In terms of processing, asn-204 contains mainly a high-mannose-type glycan (Hex(7-9)GlcNAc(2)), with a small fraction (8%) bearing a single GlcNAc at this site.

It localises to the secreted. It carries out the reaction Endohydrolysis of (1-&gt;4)-beta-D-glucosidic linkages in cellulose, lichenin and cereal beta-D-glucans.. Its function is as follows. Endoglucanase (EG) that cleaves the internal beta-1,4-glucosidic bonds in cellulose. The degradation of cellulose involves an interplay between different cellulolytic enzymes. Hydrolysis starts with EGs, which cut internal glycosidic linkages to reduce the polymerization degree of the substrate and creates new chain ends for exocellobiohydrolases (CBHs). The CBH release the disaccharide cellobiose from the non-reducing end of the cellulose polymer chain. Finally, beta-1,4-glucosidases hydrolyze the cellobiose and other short cello-oligosaccharides into glucose units. This chain is Endoglucanase EG-1 (egl1), found in Hypocrea jecorina (Trichoderma reesei).